A 558-amino-acid chain; its full sequence is 2-isopropylmalate synthase (558 aa).

One can recognise a Pyruvate carboxyltransferase domain in the interval 31 to 306 (PIWCAVDLRD…DPGIDFSNID (276 aa)). Mg(2+) is bound by residues Asp40, His245, His247, and Asn281. Residues 440-558 (AGSPYSFLEH…LCAANHLSDK (119 aa)) are regulatory domain.

The protein belongs to the alpha-IPM synthase/homocitrate synthase family. LeuA type 2 subfamily. As to quaternary structure, homodimer. The cofactor is Mg(2+).

It is found in the cytoplasm. The enzyme catalyses 3-methyl-2-oxobutanoate + acetyl-CoA + H2O = (2S)-2-isopropylmalate + CoA + H(+). It participates in amino-acid biosynthesis; L-leucine biosynthesis; L-leucine from 3-methyl-2-oxobutanoate: step 1/4. Its function is as follows. Catalyzes the condensation of the acetyl group of acetyl-CoA with 3-methyl-2-oxobutanoate (2-ketoisovalerate) to form 3-carboxy-3-hydroxy-4-methylpentanoate (2-isopropylmalate). The sequence is that of 2-isopropylmalate synthase from Rhodospirillum rubrum (strain ATCC 11170 / ATH 1.1.1 / DSM 467 / LMG 4362 / NCIMB 8255 / S1).